The sequence spans 461 residues: Decaprenylphosphoryl-beta-D-ribose oxidase (461 aa).

The FAD-binding PCMH-type domain occupies 19–194 (TAPSVANVLR…MRATIEMTPT (176 aa)). FAD contacts are provided by residues 53–63 (ARGLGRSYGDN), Gly117, 122–125 (TVGG), 129–132 (CDIH), Ile184, and Tyr415.

The protein belongs to the DprE1 family. Monomer. Although forming apparent dimer in crystals, DprE1 does not dimerize appreciably in solution. Interacts with DprE2 to form an epimerase complex.

The protein localises to the periplasm. It catalyses the reaction trans,octa-cis-decaprenylphospho-beta-D-ribofuranose + FAD + H(+) = trans,octa-cis-decaprenylphospho-beta-D-erythro-pentofuranosid-2-ulose + FADH2. The protein operates within cell wall biogenesis; cell wall polysaccharide biosynthesis. Is inhibited by 8-nitro-benzothiazinones (BTZs) such as BTZ043 and PBTZ169; BTZs are a new class of antimycobacterial agents that kill M.tuberculosis in vitro, ex vivo, and in mouse models of tuberculosis. Is also inhibited by dinitrobenzamide derivatives (DNBs), which thus block formation of both cell-wall lipoarabinomannan and arabinogalactan via inhibition of decaprenyl-phospho-arabinose (DPA) synthesis; DNBs show high activity against intracellular growth of M.tuberculosis inside macrophages, including extensively drug resistant (XDR) strains. BTZs and DNBs are suicide inhibitors that act via covalent modification of DprE1; the essential nitro group of these compounds is reduced by DprE1 to a nitroso group, which then specifically reacts with Cys-387 of DprE1 to form an irreversible semimercaptal adduct. Many other compounds with diverse scaffolds were found to act as either covalent (e.g. nitroquinoxalines, nitroimidazoles) or non-covalent (e.g. the benzothiazole derivative TCA1, the 2-carboxyquinoxaline Ty38C, 8-pyrrole-benzothiazinones, 1,4-azaindoles, pyrazolopyridones, 4-aminoquinolone piperidine amides) DprE1 inhibitors. Functionally, component of the DprE1-DprE2 complex that catalyzes the 2-step epimerization of decaprenyl-phospho-ribose (DPR) to decaprenyl-phospho-arabinose (DPA), a key precursor that serves as the arabinose donor required for the synthesis of cell-wall arabinans. DprE1 catalyzes the first step of epimerization, namely FAD-dependent oxidation of the C2' hydroxyl of DPR to yield the keto intermediate decaprenyl-phospho-2'-keto-D-arabinose (DPX). The intermediate DPX is then transferred to DprE2 subunit of the epimerase complex, most probably through a 'substrate channel' at the interface of DprE1-DprE2 complex. Can also use farnesyl-phosphoryl-beta-D-ribofuranose (FPR) as substrate in vitro. DprE1 is a highly vulnerable and fully validated tuberculosis drug target. This Mycobacterium tuberculosis (strain CDC 1551 / Oshkosh) protein is Decaprenylphosphoryl-beta-D-ribose oxidase.